A 235-amino-acid polypeptide reads, in one-letter code: Myc target protein 1 (235 aa).

The Bipartite nuclear localization signal motif lies at 95–113; it reads RRRRASAPISQWSSSRRSR. Phosphoserine occurs at positions 135, 138, 141, and 149.

Belongs to the MYCT1 family. In terms of tissue distribution, down-regulated in gastric cancer tissues.

The protein resides in the nucleus. Functionally, may regulate certain MYC target genes, MYC seems to be a direct upstream transcriptional activator. Does not seem to significantly affect growth cell capacity. Overexpression seems to mediate many of the known phenotypic features associated with MYC, including promotion of apoptosis, alteration of morphology, enhancement of anchorage-independent growth, tumorigenic conversion, promotion of genomic instability, and inhibition of hematopoietic differentiation. This chain is Myc target protein 1 (MYCT1), found in Homo sapiens (Human).